The primary structure comprises 160 residues: MKLEVLPLDQKTFSAYGDVIETQERDFFHINNGLVERYHDLAKVEVLEQDRTLISINRAQPAAMPIVVHELERHPLGTQAFVPMNGEAFVVIVALGDDKPDLSTLRAFISNGRQGVNYHRNVWHHPLFAWQTVTDFLTVDRGGSDNCDVESIPTHELCFT.

Belongs to the ureidoglycolate lyase family. In terms of assembly, homodimer. Ni(2+) is required as a cofactor.

The enzyme catalyses (S)-ureidoglycolate = urea + glyoxylate. It functions in the pathway nitrogen metabolism; (S)-allantoin degradation. Catalyzes the catabolism of the allantoin degradation intermediate (S)-ureidoglycolate, generating urea and glyoxylate. Involved in the utilization of allantoin as nitrogen source. This Salmonella gallinarum (strain 287/91 / NCTC 13346) protein is Ureidoglycolate lyase.